The chain runs to 236 residues: Transcriptional activator protein SolR (236 aa).

One can recognise an HTH luxR-type domain in the interval 169 to 234 (VPESSAALTA…QAVVKAIAIG (66 aa)). Residues 193–212 (AYEIGQILRISERTVNFHVN) constitute a DNA-binding region (H-T-H motif).

This sequence belongs to the autoinducer-regulated transcriptional regulatory protein family.

This chain is Transcriptional activator protein SolR (solR), found in Ralstonia nicotianae (strain ATCC BAA-1114 / GMI1000) (Ralstonia solanacearum).